The primary structure comprises 310 residues: D-alanine--D-alanine ligase (310 aa).

Positions 107 to 305 (KKVWQSAGLP…FSALVQSILA (199 aa)) constitute an ATP-grasp domain. 134-189 (EQLHCQDFVIKPALEGSSVGVSRVKNQEQLAAAIPFAGGARAKIMAEPWIVGRELT) provides a ligand contact to ATP. Residues Asp259, Glu272, and Asn274 each coordinate Mg(2+).

Belongs to the D-alanine--D-alanine ligase family. Mg(2+) is required as a cofactor. The cofactor is Mn(2+).

The protein localises to the cytoplasm. It catalyses the reaction 2 D-alanine + ATP = D-alanyl-D-alanine + ADP + phosphate + H(+). The protein operates within cell wall biogenesis; peptidoglycan biosynthesis. Functionally, cell wall formation. The sequence is that of D-alanine--D-alanine ligase from Dichelobacter nodosus (strain VCS1703A).